The following is a 104-amino-acid chain: Cysteine-rich and transmembrane domain-containing protein 1 (104 aa).

Composition is skewed to pro residues over residues 1–25 (MNPE…PQQP) and 33–47 (GAPP…PPQG). Residues 1–47 (MNPENPPPYPGPGPTAPYPPYPQQPMGPMGPMGAPPPQGYPYPPPQG) form a disordered region. The chain crosses the membrane as a helical span at residues 81–98 (LGPSTCLTACWTALCCCC).

This sequence belongs to the CYSTM1 family.

The protein resides in the membrane. The chain is Cysteine-rich and transmembrane domain-containing protein 1 (Cystm1) from Mus musculus (Mouse).